A 606-amino-acid polypeptide reads, in one-letter code: Zinc finger protein 214 (606 aa).

The KRAB domain maps to 3 to 83 (VTFEDVTIIF…GAQMYENQNY (81 aa)). The C2H2-type 1; degenerate zinc finger occupies 275–297 (YGCDEVDGNFHQSSGVHFHQRVH). The segment at 303–325 (YSCNACGKSFSQISSLHNHQRVH) adopts a C2H2-type 2 zinc-finger fold. The C2H2-type 3; degenerate zinc-finger motif lies at 330–352 (FYKIECDKDLSRNSLLHIHQRLH). 8 C2H2-type zinc fingers span residues 358 to 380 (FKCN…QRVH), 386 to 408 (YKCD…QLVH), 414 to 436 (YKCE…QRVH), 442 to 464 (YKCD…QRVH), 470 to 492 (YTCP…QRVH), 498 to 520 (YKCE…QRVH), 526 to 548 (YKCH…QRVH), and 554 to 576 (YQCA…QRVH).

Belongs to the krueppel C2H2-type zinc-finger protein family.

The protein resides in the nucleus. In terms of biological role, may be involved in transcriptional regulation. The chain is Zinc finger protein 214 (ZNF214) from Homo sapiens (Human).